Consider the following 372-residue polypeptide: ATP phosphoribosyltransferase regulatory subunit (372 aa).

This sequence belongs to the class-II aminoacyl-tRNA synthetase family. HisZ subfamily. Heteromultimer composed of HisG and HisZ subunits.

The protein resides in the cytoplasm. It functions in the pathway amino-acid biosynthesis; L-histidine biosynthesis; L-histidine from 5-phospho-alpha-D-ribose 1-diphosphate: step 1/9. In terms of biological role, required for the first step of histidine biosynthesis. May allow the feedback regulation of ATP phosphoribosyltransferase activity by histidine. The polypeptide is ATP phosphoribosyltransferase regulatory subunit (Rhizobium rhizogenes (strain K84 / ATCC BAA-868) (Agrobacterium radiobacter)).